We begin with the raw amino-acid sequence, 387 residues long: Phosphoglycerate kinase (387 aa).

Residues 21-23 (DLN), Arg-36, 59-62 (HLGR), Arg-113, and Arg-146 contribute to the substrate site. Residues Lys-197, Glu-314, and 340–343 (GGDT) contribute to the ATP site.

This sequence belongs to the phosphoglycerate kinase family. In terms of assembly, monomer.

It is found in the cytoplasm. The enzyme catalyses (2R)-3-phosphoglycerate + ATP = (2R)-3-phospho-glyceroyl phosphate + ADP. Its pathway is carbohydrate degradation; glycolysis; pyruvate from D-glyceraldehyde 3-phosphate: step 2/5. This Alcanivorax borkumensis (strain ATCC 700651 / DSM 11573 / NCIMB 13689 / SK2) protein is Phosphoglycerate kinase.